A 504-amino-acid polypeptide reads, in one-letter code: Peptidyl-prolyl cis-trans isomerase-like 4 (504 aa).

One can recognise a PPIase cyclophilin-type domain in the interval 1-169; it reads MSVMLETSLG…QNIRIRHVEI (169 aa). The RRM domain occupies 246–324; sequence NILFVCKLNP…RRIWVDFSQS (79 aa). The span at 330–339 shows a compositional bias: polar residues; it reads RSMLSSSNPT. The interval 330–504 is disordered; it reads RSMLSSSNPT…RERDDRDRRR (175 aa). Residues 340-354 are compositionally biased toward gly residues; it reads GRGGRGGRGGRGGNY. Composition is skewed to basic and acidic residues over residues 356–381 and 416–504; these read GRRD…DSRR and SKRD…DRRR.

This sequence belongs to the cyclophilin-type PPIase family. PPIL4 subfamily.

The protein localises to the nucleus. It catalyses the reaction [protein]-peptidylproline (omega=180) = [protein]-peptidylproline (omega=0). Its function is as follows. PPIases accelerate the folding of proteins. It catalyzes the cis-trans isomerization of proline imidic peptide bonds in oligopeptides. The protein is Peptidyl-prolyl cis-trans isomerase-like 4 (CYP6) of Cryptococcus neoformans var. neoformans serotype D (strain B-3501A) (Filobasidiella neoformans).